The primary structure comprises 176 residues: 2-C-methyl-D-erythritol 2,4-cyclodiphosphate synthase (176 aa).

2 residues coordinate a divalent metal cation: D22 and H24. 4-CDP-2-C-methyl-D-erythritol 2-phosphate contacts are provided by residues 22–24 and 48–49; these read DVH and HS. H56 is an a divalent metal cation binding site. 4-CDP-2-C-methyl-D-erythritol 2-phosphate-binding positions include 70-72, 146-149, F153, and R156; these read DIG and TTSE.

This sequence belongs to the IspF family. As to quaternary structure, homotrimer. The cofactor is a divalent metal cation.

The enzyme catalyses 4-CDP-2-C-methyl-D-erythritol 2-phosphate = 2-C-methyl-D-erythritol 2,4-cyclic diphosphate + CMP. Its pathway is isoprenoid biosynthesis; isopentenyl diphosphate biosynthesis via DXP pathway; isopentenyl diphosphate from 1-deoxy-D-xylulose 5-phosphate: step 4/6. Its function is as follows. Involved in the biosynthesis of isopentenyl diphosphate (IPP) and dimethylallyl diphosphate (DMAPP), two major building blocks of isoprenoid compounds. Catalyzes the conversion of 4-diphosphocytidyl-2-C-methyl-D-erythritol 2-phosphate (CDP-ME2P) to 2-C-methyl-D-erythritol 2,4-cyclodiphosphate (ME-CPP) with a corresponding release of cytidine 5-monophosphate (CMP). The chain is 2-C-methyl-D-erythritol 2,4-cyclodiphosphate synthase from Xylella fastidiosa (strain 9a5c).